Consider the following 475-residue polypeptide: tRNA modification GTPase MnmE (475 aa).

(6S)-5-formyl-5,6,7,8-tetrahydrofolate contacts are provided by Arg24, Glu81, and Lys124. Residues 220–397 (GLSVVLAGQP…LRRELLRLVG (178 aa)) form the TrmE-type G domain. Position 230 (Asn230) interacts with K(+). Residues 230–235 (NVGKSS), 249–255 (TPIAGTT), 274–277 (DTAG), and 378–380 (SAR) contribute to the GTP site. Residue Ser234 coordinates Mg(2+). K(+) contacts are provided by Thr249, Ile251, and Thr254. Residue Thr255 coordinates Mg(2+). Lys475 contacts (6S)-5-formyl-5,6,7,8-tetrahydrofolate.

This sequence belongs to the TRAFAC class TrmE-Era-EngA-EngB-Septin-like GTPase superfamily. TrmE GTPase family. Homodimer. Heterotetramer of two MnmE and two MnmG subunits. K(+) serves as cofactor.

The protein resides in the cytoplasm. Exhibits a very high intrinsic GTPase hydrolysis rate. Involved in the addition of a carboxymethylaminomethyl (cmnm) group at the wobble position (U34) of certain tRNAs, forming tRNA-cmnm(5)s(2)U34. The chain is tRNA modification GTPase MnmE from Cupriavidus necator (strain ATCC 17699 / DSM 428 / KCTC 22496 / NCIMB 10442 / H16 / Stanier 337) (Ralstonia eutropha).